A 566-amino-acid polypeptide reads, in one-letter code: E3 ubiquitin-protein ligase RNF220 (566 aa).

Lys277 is covalently cross-linked (Glycyl lysine isopeptide (Lys-Gly) (interchain with G-Cter in SUMO2)). A disordered region spans residues 277 to 297; that stretch reads KREGESPTASPHSSATDDLHH. Ser390 is modified (phosphoserine). Residues 485–513 adopt a coiled-coil conformation; the sequence is EDSAVTTFEALKARVRELERQLSRGDRYK. Residues 514–522 are required for targeting to the cytoplasm; sequence CLICMDSYS. The RING-type zinc-finger motif lies at 514-553; sequence CLICMDSYSMPLTSIQCWHVHCEECWLRTLGAKKLCPQCN.

Interacts with SIN3B. Interacts with CTNNB1 (via Armadillo repeats 2-8). Interacts with USP7 (via MATH domain). In terms of processing, auto-ubiquitinated; leads to proteasomal degradation. As to expression, ubiquitously expressed. Abundant in brain and spinal cord, particularly in the cerebellum and cerebral cortex. In fetal tissues expressed in the cerebellum, spinal cord and cortex.

Its subcellular location is the cytoplasm. The protein resides in the nucleus. The catalysed reaction is S-ubiquitinyl-[E2 ubiquitin-conjugating enzyme]-L-cysteine + [acceptor protein]-L-lysine = [E2 ubiquitin-conjugating enzyme]-L-cysteine + N(6)-ubiquitinyl-[acceptor protein]-L-lysine.. Its pathway is protein modification; protein ubiquitination. Functionally, E3 ubiquitin-protein ligase that promotes the ubiquitination and proteasomal degradation of SIN3B. Independently of its E3 ligase activity, acts as a CTNNB1 stabilizer through USP7-mediated deubiquitination of CTNNB1 promoting Wnt signaling. Plays a critical role in the regulation of nuclear lamina. The polypeptide is E3 ubiquitin-protein ligase RNF220 (RNF220) (Homo sapiens (Human)).